Reading from the N-terminus, the 462-residue chain is Zinc finger CCCH domain-containing protein 8 (462 aa).

C3H1-type zinc fingers lie at residues 105-133 (RPGE…HPQW), 156-184 (QEGE…HPKE), 209-237 (RPSE…HPKD), 288-316 (RPGE…HPDR), 367-395 (RPGA…HPID), and 422-450 (REDA…HPPP).

This is Zinc finger CCCH domain-containing protein 8 from Oryza sativa subsp. japonica (Rice).